Here is a 548-residue protein sequence, read N- to C-terminus: Chaperonin GroEL (548 aa).

ATP is bound by residues 30–33, lysine 51, 87–91, glycine 415, 479–481, and aspartate 495; these read TLGP, DGTTT, and NAA.

This sequence belongs to the chaperonin (HSP60) family. As to quaternary structure, forms a cylinder of 14 subunits composed of two heptameric rings stacked back-to-back. Interacts with the co-chaperonin GroES. UMPylated on a tyrosine residue by YdiU under ATP-limited conditions.

The protein resides in the cytoplasm. The enzyme catalyses ATP + H2O + a folded polypeptide = ADP + phosphate + an unfolded polypeptide.. UMPylation of the chaperone by YdiU negatively regulates its activity, facilitating Salmonella survival under ATP-limited conditions. Functionally, together with its co-chaperonin GroES, plays an essential role in assisting protein folding. The GroEL-GroES system forms a nano-cage that allows encapsulation of the non-native substrate proteins and provides a physical environment optimized to promote and accelerate protein folding. The sequence is that of Chaperonin GroEL from Salmonella typhimurium (strain LT2 / SGSC1412 / ATCC 700720).